The primary structure comprises 305 residues: RxLR effector protein PexRD25 (305 aa).

The signal sequence occupies residues 1 to 16 (MRFLFYMLLACSAVVA). The short motif at 44 to 56 (RLLRDRRSVDEER) is the RxLR-dEER element.

The protein belongs to the RxLR effector family.

It localises to the secreted. The protein localises to the host nucleus. Its subcellular location is the host nucleolus. Its function is as follows. Effector that enhances P.infestans colonization of Nicotiana benthamiana leaves. The polypeptide is RxLR effector protein PexRD25 (Phytophthora infestans (strain T30-4) (Potato late blight agent)).